Here is a 315-residue protein sequence, read N- to C-terminus: Protoheme IX farnesyltransferase 1 (315 aa).

8 consecutive transmembrane segments (helical) span residues 30–50 (PGII…AWIQ), 56–76 (GGPG…LVMA), 106–126 (IPPP…FIML), 132–152 (LTAV…TLWF), 162–182 (VGSF…TGYI), 186–206 (AILL…AIGI), 249–269 (LYID…AIWL), and 289–309 (FFYS…DSFI).

This sequence belongs to the UbiA prenyltransferase family. Protoheme IX farnesyltransferase subfamily. Interacts with CtaA.

It is found in the cell membrane. The catalysed reaction is heme b + (2E,6E)-farnesyl diphosphate + H2O = Fe(II)-heme o + diphosphate. It functions in the pathway porphyrin-containing compound metabolism; heme O biosynthesis; heme O from protoheme: step 1/1. In terms of biological role, converts heme B (protoheme IX) to heme O by substitution of the vinyl group on carbon 2 of heme B porphyrin ring with a hydroxyethyl farnesyl side group. This chain is Protoheme IX farnesyltransferase 1, found in Bacillus velezensis (strain DSM 23117 / BGSC 10A6 / LMG 26770 / FZB42) (Bacillus amyloliquefaciens subsp. plantarum).